We begin with the raw amino-acid sequence, 794 residues long: K(+)-insensitive pyrophosphate-energized proton pump (794 aa).

5 consecutive transmembrane segments (helical) span residues 20-40 (ALVA…GVLV), 74-94 (TLGV…ADDW), 102-122 (IFFL…MWLA), 163-183 (GVVG…VVLV), and 194-214 (GFGL…GIFT). Position 215 (Lys-215) interacts with substrate. Mg(2+) is bound by residues Asp-218, Asp-222, Asn-245, and Asp-248. The next 6 helical transmembrane spans lie at 264–284 (YAVT…DFGL), 285–305 (AFPL…IFAV), 321–341 (GFFI…FVYL), 365–385 (ILAL…QQLT), 422–442 (AVYT…LGGT), and 446–466 (LALF…GVIV). A Mg(2+)-binding site is contributed by Asp-476. Helical transmembrane passes span 508–528 (AITK…LFGS), 564–584 (VGLI…INAV), and 641–661 (IFIG…GAIG). The Ca(2+) site is built by Asp-678, Asp-704, and Asp-708. Lys-711 is a substrate binding site. Helical transmembrane passes span 717 to 737 (AINP…PAVI) and 747 to 767 (VVVR…AVYV).

It belongs to the H(+)-translocating pyrophosphatase (TC 3.A.10) family. K(+)-insensitive subfamily. Homodimer. Mg(2+) is required as a cofactor.

The protein localises to the cell membrane. It catalyses the reaction diphosphate + H2O + H(+)(in) = 2 phosphate + 2 H(+)(out). Functionally, proton pump that utilizes the energy of pyrophosphate hydrolysis as the driving force for proton movement across the membrane. Generates a proton motive force. The sequence is that of K(+)-insensitive pyrophosphate-energized proton pump from Streptomyces coelicolor (strain ATCC BAA-471 / A3(2) / M145).